The chain runs to 261 residues: Syntaxin-7 (261 aa).

The residue at position 2 (S2) is an N-acetylserine. Residues 2 to 238 lie on the Cytoplasmic side of the membrane; it reads SYTPGVGGDP…DYQRKSRKTL (237 aa). Residue T4 is modified to Phosphothreonine. S45 is subject to Phosphoserine. A coiled-coil region spans residues 47-69; it reads ELRQQLQQKQQYTNQLTKETDKY. At S75 the chain carries Phosphoserine. At T79 the chain carries Phosphothreonine. Residues S125, S126, S129, and S205 each carry the phosphoserine modification. The interval 129–148 is disordered; it reads SGSFPEDSSKERNLVSWESQ. The 63-residue stretch at 165–227 folds into the t-SNARE coiled-coil homology domain; the sequence is LRLIHERESS…QQANQQLSRA (63 aa). Residues 239-259 form a helical; Anchor for type IV membrane protein membrane-spanning segment; it reads CIIILILVIGVVIIGLIIWGL. Residues 260–261 are Vesicular-facing; the sequence is NR.

It belongs to the syntaxin family. Forms a SNARE complex with VTI1B, STX8 and VAMP8 which functions in the homotypic fusion of late endosomes. Component of the SNARE complex composed of STX7, STX8, VAMP7 and VTI1B that is required for heterotypic fusion of late endosomes with lysosomes. Interacts with VPS11, VPS16 and VPS18. Interacts with VPS33A. Interacts with TPC1.

It is found in the early endosome membrane. In terms of biological role, may be involved in protein trafficking from the plasma membrane to the early endosome (EE) as well as in homotypic fusion of endocytic organelles. Mediates the endocytic trafficking from early endosomes to late endosomes and lysosomes. The polypeptide is Syntaxin-7 (STX7) (Pongo abelii (Sumatran orangutan)).